Consider the following 122-residue polypeptide: Large ribosomal subunit protein uL14 (122 aa).

Belongs to the universal ribosomal protein uL14 family. As to quaternary structure, part of the 50S ribosomal subunit. Forms a cluster with proteins L3 and L19. In the 70S ribosome, L14 and L19 interact and together make contacts with the 16S rRNA in bridges B5 and B8.

Functionally, binds to 23S rRNA. Forms part of two intersubunit bridges in the 70S ribosome. This chain is Large ribosomal subunit protein uL14, found in Allorhizobium ampelinum (strain ATCC BAA-846 / DSM 112012 / S4) (Agrobacterium vitis (strain S4)).